Here is a 110-residue protein sequence, read N- to C-terminus: Large ribosomal subunit protein uL24 (110 aa).

It belongs to the universal ribosomal protein uL24 family. In terms of assembly, part of the 50S ribosomal subunit.

Its function is as follows. One of two assembly initiator proteins, it binds directly to the 5'-end of the 23S rRNA, where it nucleates assembly of the 50S subunit. Functionally, one of the proteins that surrounds the polypeptide exit tunnel on the outside of the subunit. This chain is Large ribosomal subunit protein uL24, found in Chloroflexus aggregans (strain MD-66 / DSM 9485).